A 101-amino-acid chain; its full sequence is Defensin-like protein 222 (101 aa).

The first 21 residues, 1–21, serve as a signal peptide directing secretion; sequence MRTIVLFSTLMILVLSCMSNA. 3 disulfide bridges follow: cysteine 68–cysteine 85, cysteine 71–cysteine 90, and cysteine 75–cysteine 92.

Belongs to the DEFL family.

Its subcellular location is the secreted. The protein is Defensin-like protein 222 of Arabidopsis thaliana (Mouse-ear cress).